Here is a 484-residue protein sequence, read N- to C-terminus: Major extracellular endoglucanase (484 aa).

An N-terminal signal peptide occupies residues 1–25 (MSIFRTASTLALATALALAAGPAFS). Glu182 acts as the Proton donor in catalysis. Glu303 (nucleophile) is an active-site residue. The disordered stretch occupies residues 370–402 (GTAGNTTPTPTPTPTPTPTPTPTPTPTPTPGTS). The interval 375-399 (TTPTPTPTPTPTPTPTPTPTPTPTP) is thr-Pro repeats ('hinge') (Pro-Thr box). Residues 378 to 398 (TPTPTPTPTPTPTPTPTPTPT) show a composition bias toward pro residues. In terms of domain architecture, CBM2 spans 395–484 (PTPTPGTSTF…TAEFGFCAAS (90 aa)).

This sequence belongs to the glycosyl hydrolase 5 (cellulase A) family.

The catalysed reaction is Endohydrolysis of (1-&gt;4)-beta-D-glucosidic linkages in cellulose, lichenin and cereal beta-D-glucans.. This is Major extracellular endoglucanase (engXCA) from Xanthomonas campestris pv. campestris (strain ATCC 33913 / DSM 3586 / NCPPB 528 / LMG 568 / P 25).